The following is a 413-amino-acid chain: Glycosyl hydrolase family 109 protein 2 (413 aa).

NAD(+) is bound by residues 26 to 27 (NR), aspartate 48, 96 to 99 (WLTH), 116 to 117 (EV), and asparagine 145. Tyrosine 174 is a binding site for substrate. NAD(+)-binding positions include 191–195 (YHNHW) and tyrosine 208. Substrate contacts are provided by residues 208-211 (YPTH) and tyrosine 290.

This sequence belongs to the Gfo/Idh/MocA family. Glycosyl hydrolase 109 subfamily. It depends on NAD(+) as a cofactor.

Its function is as follows. Glycosidase. The protein is Glycosyl hydrolase family 109 protein 2 of Phocaeicola vulgatus (strain ATCC 8482 / DSM 1447 / JCM 5826 / CCUG 4940 / NBRC 14291 / NCTC 11154) (Bacteroides vulgatus).